Here is a 265-residue protein sequence, read N- to C-terminus: Anamorsin homolog 1 (265 aa).

The N-terminal SAM-like domain stretch occupies residues methionine 1–phenylalanine 143. The interval proline 144–leucine 175 is linker. Residues cysteine 186, cysteine 195, cysteine 198, and cysteine 200 each contribute to the [2Fe-2S] cluster site. The segment at cysteine 186 to cysteine 200 is fe-S binding site A. [4Fe-4S] cluster contacts are provided by cysteine 226, cysteine 229, cysteine 237, and cysteine 240. 2 short sequence motifs (cx2C motif) span residues cysteine 226–cysteine 229 and cysteine 237–cysteine 240. Positions cysteine 226–cysteine 240 are fe-S binding site B.

Belongs to the anamorsin family. As to quaternary structure, monomer. [2Fe-2S] cluster serves as cofactor. The cofactor is [4Fe-4S] cluster.

It localises to the cytoplasm. It is found in the mitochondrion intermembrane space. Its function is as follows. Component of the cytosolic iron-sulfur (Fe-S) protein assembly (CIA) machinery. Required for the maturation of extramitochondrial Fe-S proteins. Part of an electron transfer chain functioning in an early step of cytosolic Fe-S biogenesis, facilitating the de novo assembly of a [4Fe-4S] cluster on the cytosolic Fe-S scaffold complex. Electrons are transferred from NADPH via a FAD- and FMN-containing diflavin oxidoreductase. Together with the diflavin oxidoreductase, also required for the assembly of the diferric tyrosyl radical cofactor of ribonucleotide reductase (RNR), probably by providing electrons for reduction during radical cofactor maturation in the catalytic small subunit. The chain is Anamorsin homolog 1 from Oryza sativa subsp. japonica (Rice).